The chain runs to 370 residues: Actin-related protein 2/3 complex subunit 1A (370 aa).

6 WD repeats span residues 6–45 (FLLEPITCHAWNRDRTQIALSPNNHEVHIYKKNGGQWVKA), 50–89 (EHNGHITGIDWAPKSDRIVTCGADRNAYVWSQKDGVWKPT), 140–179 (PIRSTVLSLDWHPNNVLLAAGSCDFKCRVFSAYIKEVDEK), 202–241 (GTGGWVHGVSFSASGSRLAWVSHDSTVSVADASKSVQVST), 244–284 (TEFL…TFVS), and 322–365 (LHQN…SSIQ).

The protein belongs to the WD repeat ARPC1 family. As to quaternary structure, probable component of the Arp2/3 complex in which it may replace ARPC1B.

It is found in the cytoplasm. It localises to the cytoskeleton. The protein localises to the nucleus. In terms of biological role, probably functions as a component of the Arp2/3 complex which is involved in regulation of actin polymerization and together with an activating nucleation-promoting factor (NPF) mediates the formation of branched actin networks. In addition to its role in the cytoplasmic cytoskeleton, the Arp2/3 complex also promotes actin polymerization in the nucleus, thereby regulating gene transcription and repair of damaged DNA. In Bos taurus (Bovine), this protein is Actin-related protein 2/3 complex subunit 1A (ARPC1A).